Reading from the N-terminus, the 327-residue chain is uncharacterized protein (327 aa).

An S4 RNA-binding domain is found at 12–84; that stretch reads MRIDRYLTQQ…IPITILYEDD (73 aa). Asp137 is a catalytic residue.

The protein belongs to the pseudouridine synthase RluA family.

The catalysed reaction is a uridine in RNA = a pseudouridine in RNA. This is an uncharacterized protein from Chlorobaculum parvum (strain DSM 263 / NCIMB 8327) (Chlorobium vibrioforme subsp. thiosulfatophilum).